The sequence spans 179 residues: Large ribosomal subunit protein uL6 (179 aa).

Belongs to the universal ribosomal protein uL6 family. In terms of assembly, part of the 50S ribosomal subunit.

Its function is as follows. This protein binds to the 23S rRNA, and is important in its secondary structure. It is located near the subunit interface in the base of the L7/L12 stalk, and near the tRNA binding site of the peptidyltransferase center. The protein is Large ribosomal subunit protein uL6 of Chloroherpeton thalassium (strain ATCC 35110 / GB-78).